Reading from the N-terminus, the 371-residue chain is Sporulation-specific protein 2 (371 aa).

It is found in the spore wall. Functionally, essential for sporulation and seems to have a role at the time of, or after, initiation of nuclear division. Appears to have a role in outer spore wall formation. In Saccharomyces cerevisiae (strain ATCC 204508 / S288c) (Baker's yeast), this protein is Sporulation-specific protein 2 (SSP2).